Reading from the N-terminus, the 1301-residue chain is Zinc finger protein 532 (1301 aa).

Disordered regions lie at residues 26-206 (PKAA…RETE), 223-266 (AEDK…SSSK), and 281-366 (KAAS…IKTI). Basic and acidic residues predominate over residues 32-52 (SGHDDHESHMKQNAHGEDDSH). Positions 84 to 101 (PTGNGLHNGFLTASSLDS) are enriched in polar residues. A compositionally biased stretch (basic and acidic residues) spans 102 to 111 (YSKDGAKSLK). Positions 122 to 133 (KDSTFSQFSPIS) are enriched in polar residues. Residues Ser130, Ser133, and Ser134 each carry the phosphoserine modification. Residues 136–151 (EEFDDDEKIEVDDPPD) show a composition bias toward acidic residues. Over residues 158-170 (SFRSNVLTGSAPQ) the composition is skewed to polar residues. Lys175 carries the N6-acetyllysine modification. The span at 182 to 195 (ENSSKTGLSTSGNV) shows a compositional bias: polar residues. Basic and acidic residues-rich tracts occupy residues 196–206 (EKNKAVKRETE) and 223–250 (AEDK…EKND). Thr205 is modified (phosphothreonine). 3 positions are modified to phosphoserine: Ser252, Ser307, and Ser314. Residues 303–315 (EVNDSPRAADKSP) show a composition bias toward basic and acidic residues. Over residues 337 to 359 (SISSENSSKGSPSSPAGSTPAIP) the composition is skewed to low complexity. Position 434 is a phosphoserine (Ser434). Glycyl lysine isopeptide (Lys-Gly) (interchain with G-Cter in SUMO2) cross-links involve residues Lys459 and Lys516. The C2H2-type 1; degenerate zinc finger occupies 616-635 (YKCLECGDSFALEKSLTQHY). Residues 754–779 (LKCLECNEVFQDETSLATHFQQAADT) form a C2H2-type 2; degenerate zinc finger. 5 consecutive C2H2-type zinc fingers follow at residues 783-805 (KTCT…QRIH), 842-865 (FRCV…QGSH), 870-893 (YKCP…YTQH), 905-927 (YKCS…FDQH), and 936-959 (FKCP…KSMH). Lys980 is covalently cross-linked (Glycyl lysine isopeptide (Lys-Gly) (interchain with G-Cter in SUMO2)). The disordered stretch occupies residues 983-1017 (TQNSANQNKEDTKSMNGKEKLEKKSPSPVKKSMET). Positions 990–1017 (NKEDTKSMNGKEKLEKKSPSPVKKSMET) are enriched in basic and acidic residues. C2H2-type zinc fingers lie at residues 1025-1048 (WTCW…RKEH) and 1055-1078 (HPCR…RIKH). The C2H2-type 10; degenerate zinc-finger motif lies at 1085-1111 (YACSHCPDSRRTFTKRLMLEKHVQLMH). Phosphoserine is present on Ser1140. Residues Lys1144 and Lys1167 each participate in a glycyl lysine isopeptide (Lys-Gly) (interchain with G-Cter in SUMO2) cross-link. A C2H2-type 11 zinc finger spans residues 1203 to 1226 (YQCRECGLCYTSHVSLSRHLFIVH). The tract at residues 1230 to 1263 (EPQPVSKQNGAGEDNQQENKPSHEDESPDGAVSD) is disordered. The C2H2-type 12 zinc finger occupies 1264-1286 (RKCKVCAKTFETEAALNTHMRTH).

This sequence belongs to the krueppel C2H2-type zinc-finger protein family.

The protein localises to the nucleus. May be involved in transcriptional regulation. This Homo sapiens (Human) protein is Zinc finger protein 532 (ZNF532).